The following is a 266-amino-acid chain: Small ribosomal subunit protein uS2 (266 aa).

The segment at glutamate 238 to glutamate 266 is disordered. Residues lysine 248–lysine 258 show a composition bias toward basic residues.

It belongs to the universal ribosomal protein uS2 family.

This Xylella fastidiosa (strain M12) protein is Small ribosomal subunit protein uS2.